A 482-amino-acid polypeptide reads, in one-letter code: Probable polyamine transporter At1g31820 (482 aa).

11 helical membrane passes run 36 to 56, 66 to 86, 94 to 114, 143 to 163, 171 to 191, 254 to 274, 294 to 314, 344 to 364, 367 to 387, 406 to 426, and 429 to 449; these read VSMLPLVFLIFYEVSGGPFGA, LLALLGFVIFPFIWCIPEALI, FPINGGFVVWVSSALGTFWGF, VPALATGLPRVASILILTLLL, LTIVGWTAVFMGVFSMLPFAV, VIFVALSNFLPLLSGTGAIPL, GWLQLWVQAAAATSNMGMFLA, TPLLGILFSASGVLLLSGLSF, IIAAENLLYCGGMILEFIAFV, TVGSILICVPPIVLICLVIVL, and IKVALVSFVMVVIGFLMKPCL.

Belongs to the amino acid-polyamine-organocation (APC) superfamily. Polyamine:cation symporter (PHS) (TC 2.A.3.12) family.

The protein resides in the cell membrane. Functionally, probable cell membrane polyamine/proton symporter involved in the polyamine uptake in cells. The chain is Probable polyamine transporter At1g31820 from Arabidopsis thaliana (Mouse-ear cress).